The sequence spans 86 residues: Large ribosomal subunit protein bL27c (86 aa).

The tract at residues 1 to 27 is disordered; the sequence is MAHKKGSGSTRNGRDSNSKRLGVKKYG.

It belongs to the bacterial ribosomal protein bL27 family.

The protein resides in the plastid. It localises to the chloroplast. The chain is Large ribosomal subunit protein bL27c (rpl27) from Porphyra purpurea (Red seaweed).